We begin with the raw amino-acid sequence, 265 residues long: Cyclin-C (265 aa).

A Cyclin N-terminal domain is found at 48–151 (IQVLGEQLKL…LLENLDCCLI (104 aa)).

Belongs to the cyclin family. Cyclin C subfamily. As to quaternary structure, component of the Cdk8 module of the Mediator complex.

It is found in the nucleus. Component of the Mediator complex, a coactivator involved in regulated gene transcription of nearly all RNA polymerase II-dependent genes. Mediator functions as a bridge to convey information from gene-specific regulatory proteins to the basal RNA polymerase II transcription machinery. Mediator is recruited to promoters by direct interactions with regulatory proteins and serves as a scaffold for the assembly of a functional preinitiation complex with RNA polymerase II and the general transcription factors. Binds to and activates cyclin-dependent kinase Cdk8 that phosphorylates the CTD (C-terminal domain) of the large subunit of RNA polymerase II (RNAp II), which may inhibit the formation of a transcription initiation complex. This chain is Cyclin-C (CycC), found in Aedes aegypti (Yellowfever mosquito).